The primary structure comprises 2157 residues: Polyketide synthase 2 (2157 aa).

Positions 7-244 are N-terminal acylcarrier protein transacylase domain (SAT); the sequence is FIFGDQTGGF…IPIPIWAPYH (238 aa). The Ketosynthase family 3 (KS3) domain maps to 374–807; sequence DSKIAIIGMS…GGNSALLLED (434 aa). Active-site for beta-ketoacyl synthase activity residues include Cys-546, His-681, and His-723. Residues 908–1213 form a malonyl-CoA:ACP transacylase (MAT) domain region; it reads GFVFSGQGAQ…ASLHRKDDGW (306 aa). Residue Ser-998 is the For acyl/malonyl transferase activity of the active site. The segment at 1290–1605 is product template (PT) domain; it reads TSSVQKIIRQ…RSLLNKVLPP (316 aa). The interval 1294–1428 is N-terminal hotdog fold; sequence QKIIRQTDGP…CLLRFADPTS (135 aa). The PKS/mFAS DH domain maps to 1294-1600; it reads QKIIRQTDGP…FLGMSRSLLN (307 aa). His-1327 (proton acceptor; for dehydratase activity) is an active-site residue. Residues 1455–1600 form a C-terminal hotdog fold region; the sequence is TDSLLSRGIV…FLGMSRSLLN (146 aa). Residue Asp-1514 is the Proton donor; for dehydratase activity of the active site. The segment at 1626–1652 is disordered; it reads AASAKDTERRPLDIPTRAQRQPSSAQT. Positions 1643–1652 are enriched in polar residues; it reads AQRQPSSAQT. The Carrier 1 domain maps to 1649 to 1726; sequence SAQTGTMGRI…ELKAFLGADQ (78 aa). The residue at position 1686 (Ser-1686) is an O-(pantetheine 4'-phosphoryl)serine. Positions 1733 to 1762 are disordered; it reads ACESSNGQHTPQTSDKGSGTLAVQKTDDDT. Over residues 1735-1755 the composition is skewed to polar residues; that stretch reads ESSNGQHTPQTSDKGSGTLAV. A Carrier 2 domain is found at 1765–1839; sequence DMTLNRVCAI…SLQKALCGSE (75 aa). Ser-1799 bears the O-(pantetheine 4'-phosphoryl)serine mark. The interval 1840-1859 is disordered; it reads AASNGAPEANETTPSSHRLE. Positions 1875–2151 are thioesterase (TE) domain; it reads ASPPHATSIL…MIEMGNLIGE (277 aa). Ser-1981 acts as the For thioesterase activity in catalysis.

Polyketide synthase; part of the Pks2 gene cluster that mediates the formation of infectious structures (appressoria), enabling these fungi to kill insects faster. The product of the Pks2 gene cluster is different from the one of Pks1 and has still not been identified. The protein is Polyketide synthase 2 of Metarhizium robertsii (strain ARSEF 23 / ATCC MYA-3075) (Metarhizium anisopliae (strain ARSEF 23)).